Here is a 283-residue protein sequence, read N- to C-terminus: MQIVTDPAEMQATADKLRAGRQLIGVVMTMGALHEGHLSLVNLAREHAGTIIMTLFVNPSQFGPGEDFQRYPRPFEKDAAMARSAGVDYLFAPTPEAMYPEGFQTTVSCSGITRRFEGERRPGHFDGVATIVSKLLNITRPHVAVFGEKDAQQLALIRRINRDLDMGVQIVAAPTVRENDGLAVSSRNIYLTGDERQKAPAIHRAIQHAGEMLAAGENDLKAVAAEVAGMITENTQFKLEYAAFVDEESFEPAETVVKEHEYRLLIAAAAERVRLIDNQKFRV.

30 to 37 provides a ligand contact to ATP; sequence MGALHEGH. Residue His37 is the Proton donor of the active site. Residue Gln61 participates in (R)-pantoate binding. Residue Gln61 coordinates beta-alanine. 147–150 is an ATP binding site; the sequence is GEKD. (R)-pantoate is bound at residue Gln153. Residues Val176 and 184-187 contribute to the ATP site; that span reads VSSR.

It belongs to the pantothenate synthetase family. Homodimer.

The protein localises to the cytoplasm. It carries out the reaction (R)-pantoate + beta-alanine + ATP = (R)-pantothenate + AMP + diphosphate + H(+). It participates in cofactor biosynthesis; (R)-pantothenate biosynthesis; (R)-pantothenate from (R)-pantoate and beta-alanine: step 1/1. In terms of biological role, catalyzes the condensation of pantoate with beta-alanine in an ATP-dependent reaction via a pantoyl-adenylate intermediate. The protein is Pantothenate synthetase of Chlorobium luteolum (strain DSM 273 / BCRC 81028 / 2530) (Pelodictyon luteolum).